The following is a 1196-amino-acid chain: Major DNA-binding protein (1196 aa).

A zinc finger lies at 499 to 512 (CNLCTFDTRHACVH). 2 short sequence motifs (required for filament formation) span residues 843 to 844 (FW) and 1142 to 1144 (FNF). A disordered region spans residues 1158-1196 (GGPGAPGPAFAGRKRAFHGDDPFGEGPPDKKGDLTLDML). The segment at 1170–1196 (RKRAFHGDDPFGEGPPDKKGDLTLDML) is required for nuclear localization. Over residues 1174–1196 (FHGDDPFGEGPPDKKGDLTLDML) the composition is skewed to basic and acidic residues.

It belongs to the herpesviridae major DNA-binding protein family. Homooligomers. Forms double-helical filaments necessary for the formation of replication compartments within the host nucleus. Interacts with the origin-binding protein. Interacts with the helicase primase complex; this interaction stimulates primer synthesis activity of the helicase-primase complex. Interacts with the DNA polymerase. Interacts with the alkaline exonuclease; this interaction increases its nuclease processivity.

It is found in the host nucleus. Plays several crucial roles in viral infection. Participates in the opening of the viral DNA origin to initiate replication by interacting with the origin-binding protein. May disrupt loops, hairpins and other secondary structures present on ssDNA to reduce and eliminate pausing of viral DNA polymerase at specific sites during elongation. Promotes viral DNA recombination by performing strand-transfer, characterized by the ability to transfer a DNA strand from a linear duplex to a complementary single-stranded DNA circle. Can also catalyze the renaturation of complementary single strands. Additionally, reorganizes the host cell nucleus, leading to the formation of prereplicative sites and replication compartments. This process is driven by the protein which can form double-helical filaments in the absence of DNA. This chain is Major DNA-binding protein, found in Homo sapiens (Human).